Here is a 410-residue protein sequence, read N- to C-terminus: NADH-quinone oxidoreductase subunit H (410 aa).

The next 9 helical transmembrane spans lie at 11–31 (LVAAKAIAVFVFLMLTVLVAI), 79–99 (FVYFVAPIISVIPAFTAFAFI), 119–139 (LPVAVLFILGLSAIGVYGIVL), 160–180 (VISYEVAMGLSFATVFLMAGT), 192–212 (GVWYAFLLLPSFVIYLISMVG), 257–277 (ALAATLFFGGWHAPWPLNMWA), 283–303 (WWPLIWFTAKVWGFLFIYFWL), 317–337 (ALGWKLLIPVSLVWVMVAAII), and 347–367 (YWTPTLVFSSIVVAAAMVLLL). A disordered region spans residues 376 to 410 (ARASARQRGDEGTSPEPAFPTPPLLAGATKENAGG).

The protein belongs to the complex I subunit 1 family. In terms of assembly, NDH-1 is composed of 14 different subunits. Subunits NuoA, H, J, K, L, M, N constitute the membrane sector of the complex.

The protein localises to the cell membrane. It carries out the reaction a quinone + NADH + 5 H(+)(in) = a quinol + NAD(+) + 4 H(+)(out). Functionally, NDH-1 shuttles electrons from NADH, via FMN and iron-sulfur (Fe-S) centers, to quinones in the respiratory chain. The immediate electron acceptor for the enzyme in this species is believed to be menaquinone. Couples the redox reaction to proton translocation (for every two electrons transferred, four hydrogen ions are translocated across the cytoplasmic membrane), and thus conserves the redox energy in a proton gradient. The protein is NADH-quinone oxidoreductase subunit H of Mycobacterium bovis (strain ATCC BAA-935 / AF2122/97).